The sequence spans 351 residues: Photosystem II D2 protein (351 aa).

Residues 39 to 59 form a helical membrane-spanning segment; it reads TAYLAIGGWLTGTTFVTSWYT. A chlorophyll a-binding site is contributed by histidine 116. A helical membrane pass occupies residues 123 to 139; sequence GFMLRQFEIARLVGIRP. Pheophytin a-binding residues include glutamine 128 and asparagine 141. A helical transmembrane segment spans residues 151–164; it reads VFVSVFLMYPLGQS. Histidine 196 contributes to the chlorophyll a binding site. A helical membrane pass occupies residues 206-226; that stretch reads GALLCAIHGATVENTLFEDGE. The a plastoquinone site is built by histidine 213 and phenylalanine 260. Histidine 213 is a binding site for Fe cation. Histidine 267 serves as a coordination point for Fe cation. Residues 277–293 form a helical membrane-spanning segment; the sequence is GLWTSSIGIIGLALNLR.

Belongs to the reaction center PufL/M/PsbA/D family. PSII is composed of 1 copy each of membrane proteins PsbA, PsbB, PsbC, PsbD, PsbE, PsbF, PsbH, PsbI, PsbJ, PsbK, PsbL, PsbM, PsbT, PsbX, PsbY, PsbZ, Psb30/Ycf12, peripheral proteins PsbO, CyanoQ (PsbQ), PsbU, PsbV and a large number of cofactors. It forms dimeric complexes. The D1/D2 heterodimer binds P680, chlorophylls that are the primary electron donor of PSII, and subsequent electron acceptors. It shares a non-heme iron and each subunit binds pheophytin, quinone, additional chlorophylls, carotenoids and lipids. There is also a Cl(-1) ion associated with D1 and D2, which is required for oxygen evolution. The PSII complex binds additional chlorophylls, carotenoids and specific lipids. serves as cofactor.

The protein localises to the cellular thylakoid membrane. The catalysed reaction is 2 a plastoquinone + 4 hnu + 2 H2O = 2 a plastoquinol + O2. Photosystem II (PSII) is a light-driven water:plastoquinone oxidoreductase that uses light energy to abstract electrons from H(2)O, generating O(2) and a proton gradient subsequently used for ATP formation. It consists of a core antenna complex that captures photons, and an electron transfer chain that converts photonic excitation into a charge separation. The D1/D2 (PsbA/PsbD) reaction center heterodimer binds P680, the primary electron donor of PSII as well as several subsequent electron acceptors. D2 is needed for assembly of a stable PSII complex. The chain is Photosystem II D2 protein from Parasynechococcus marenigrum (strain WH8102).